Reading from the N-terminus, the 143-residue chain is Large ribosomal subunit protein uL13 (143 aa).

The protein belongs to the universal ribosomal protein uL13 family. In terms of assembly, part of the 50S ribosomal subunit.

This protein is one of the early assembly proteins of the 50S ribosomal subunit, although it is not seen to bind rRNA by itself. It is important during the early stages of 50S assembly. The protein is Large ribosomal subunit protein uL13 of Coprothermobacter proteolyticus (strain ATCC 35245 / DSM 5265 / OCM 4 / BT).